Here is a 196-residue protein sequence, read N- to C-terminus: Large ribosomal subunit protein uL18 (196 aa).

Belongs to the universal ribosomal protein uL18 family. In terms of assembly, part of the 50S ribosomal subunit. Contacts the 5S and 23S rRNAs.

Functionally, this is one of the proteins that bind and probably mediate the attachment of the 5S RNA into the large ribosomal subunit, where it forms part of the central protuberance. The sequence is that of Large ribosomal subunit protein uL18 from Saccharolobus islandicus (strain Y.N.15.51 / Yellowstone #2) (Sulfolobus islandicus).